The chain runs to 163 residues: MKKIRIGQGFDIHPLVVGRDLIIGGVTIPYEKGLLGHSDADVLLHALCDALLGAAALGDIGRHFSDTDARYQGIDSRKLVREVHRLLTEAGYRVVNIDATIIAQVPKMAPHIPGMVTNIAQDLTLPAGDINIKAKTAEKLGVVGRGEGIVAEVVCLIADGDEV.

Residues Asp11 and His13 each coordinate a divalent metal cation. 4-CDP-2-C-methyl-D-erythritol 2-phosphate contacts are provided by residues 11–13 (DIH) and 37–38 (HS). An a divalent metal cation-binding site is contributed by His45. 4-CDP-2-C-methyl-D-erythritol 2-phosphate-binding positions include 59-61 (DIG), 64-68 (FSDTD), 103-109 (AQVPKMA), and Arg145.

This sequence belongs to the IspF family. Homotrimer. Requires a divalent metal cation as cofactor.

The catalysed reaction is 4-CDP-2-C-methyl-D-erythritol 2-phosphate = 2-C-methyl-D-erythritol 2,4-cyclic diphosphate + CMP. It participates in isoprenoid biosynthesis; isopentenyl diphosphate biosynthesis via DXP pathway; isopentenyl diphosphate from 1-deoxy-D-xylulose 5-phosphate: step 4/6. Its function is as follows. Involved in the biosynthesis of isopentenyl diphosphate (IPP) and dimethylallyl diphosphate (DMAPP), two major building blocks of isoprenoid compounds. Catalyzes the conversion of 4-diphosphocytidyl-2-C-methyl-D-erythritol 2-phosphate (CDP-ME2P) to 2-C-methyl-D-erythritol 2,4-cyclodiphosphate (ME-CPP) with a corresponding release of cytidine 5-monophosphate (CMP). This is 2-C-methyl-D-erythritol 2,4-cyclodiphosphate synthase from Nitrosomonas europaea (strain ATCC 19718 / CIP 103999 / KCTC 2705 / NBRC 14298).